A 232-amino-acid chain; its full sequence is uncharacterized protein (232 aa).

A helical membrane pass occupies residues 209-229 (ATISTPALGYAYFLFTLTLVF).

It localises to the host membrane. This is an uncharacterized protein from Saccharolobus islandicus (Sulfolobus islandicus).